Reading from the N-terminus, the 295-residue chain is Ribosomal RNA small subunit methyltransferase A (295 aa).

6 residues coordinate S-adenosyl-L-methionine: Asn-29, Leu-31, Gly-56, Glu-77, Asp-102, and Asn-128.

The protein belongs to the class I-like SAM-binding methyltransferase superfamily. rRNA adenine N(6)-methyltransferase family. RsmA subfamily.

It localises to the cytoplasm. It catalyses the reaction adenosine(1518)/adenosine(1519) in 16S rRNA + 4 S-adenosyl-L-methionine = N(6)-dimethyladenosine(1518)/N(6)-dimethyladenosine(1519) in 16S rRNA + 4 S-adenosyl-L-homocysteine + 4 H(+). Specifically dimethylates two adjacent adenosines (A1518 and A1519) in the loop of a conserved hairpin near the 3'-end of 16S rRNA in the 30S particle. May play a critical role in biogenesis of 30S subunits. The polypeptide is Ribosomal RNA small subunit methyltransferase A (Listeria monocytogenes serotype 4a (strain HCC23)).